We begin with the raw amino-acid sequence, 395 residues long: Cystathionine beta-lyase MetC (395 aa).

An N6-(pyridoxal phosphate)lysine modification is found at Lys210.

It belongs to the trans-sulfuration enzymes family. Homotetramer; dimer of dimers. The cofactor is pyridoxal 5'-phosphate.

It localises to the cytoplasm. The enzyme catalyses L,L-cystathionine + H2O = L-homocysteine + pyruvate + NH4(+). It catalyses the reaction L-cysteine + H2O = hydrogen sulfide + pyruvate + NH4(+) + H(+). The catalysed reaction is an S-substituted L-cysteine + H2O = a thiol + pyruvate + NH4(+). The protein operates within amino-acid biosynthesis; L-methionine biosynthesis via de novo pathway; L-homocysteine from L-cystathionine: step 1/1. L-cysteine inhibits cystathionine beta-lyase activity competitively. Inhibited by aminoethoxyvinylglycine (AVG). In terms of biological role, primarily catalyzes the cleavage of cystathionine to homocysteine, pyruvate and ammonia during methionine biosynthesis. Also exhibits cysteine desulfhydrase activity, producing sulfide from cysteine. In addition, under certain growth conditions, exhibits significant alanine racemase coactivity. The chain is Cystathionine beta-lyase MetC from Escherichia coli (strain K12).